A 173-amino-acid chain; its full sequence is Peptidoglycan-associated lipoprotein (173 aa).

An N-terminal signal peptide occupies residues 1-21; the sequence is MQLNKVLKGLMIALPVMAIAA. Residue Cys-22 is the site of N-palmitoyl cysteine attachment. Residue Cys-22 is the site of S-diacylglycerol cysteine attachment. Residues 30–58 form a disordered region; the sequence is NDGSEGMLGAGTGMDANGGNGNMSSEEQA. Residues 35 to 50 are compositionally biased toward gly residues; sequence GMLGAGTGMDANGGNG. Residues 60–173 enclose the OmpA-like domain; that stretch reads LQMQQLQQNN…SKNRRAVLVY (114 aa).

Belongs to the Pal lipoprotein family. As to quaternary structure, the Tol-Pal system is composed of five core proteins: the inner membrane proteins TolA, TolQ and TolR, the periplasmic protein TolB and the outer membrane protein Pal. They form a network linking the inner and outer membranes and the peptidoglycan layer.

Its subcellular location is the cell outer membrane. Part of the Tol-Pal system, which plays a role in outer membrane invagination during cell division and is important for maintaining outer membrane integrity. The sequence is that of Peptidoglycan-associated lipoprotein from Escherichia coli O157:H7.